The following is a 92-amino-acid chain: MTRSLKKGPNVADHLLKKIENLNSQGEKRVIVTWSRGSTIVPAMIGHTIAVYNGREHLPIFVTDLMVGHKLGEFSPTRTFRGHAKSDKKSRR.

This sequence belongs to the universal ribosomal protein uS19 family.

It is found in the plastid. The protein localises to the chloroplast. Its function is as follows. Protein S19 forms a complex with S13 that binds strongly to the 16S ribosomal RNA. The chain is Small ribosomal subunit protein uS19c from Spirogyra maxima (Green alga).